The following is a 173-amino-acid chain: dCTP deaminase, dUMP-forming (173 aa).

DCTP contacts are provided by residues 93-98, D111, 119-121, Q138, and Y151; these read RSSIGR and TLE. E121 (proton donor/acceptor) is an active-site residue.

This sequence belongs to the dCTP deaminase family. In terms of assembly, homotrimer.

The enzyme catalyses dCTP + 2 H2O = dUMP + NH4(+) + diphosphate. It functions in the pathway pyrimidine metabolism; dUMP biosynthesis; dUMP from dCTP: step 1/1. Bifunctional enzyme that catalyzes both the deamination of dCTP to dUTP and the hydrolysis of dUTP to dUMP without releasing the toxic dUTP intermediate. The polypeptide is dCTP deaminase, dUMP-forming (Cytophaga hutchinsonii (strain ATCC 33406 / DSM 1761 / CIP 103989 / NBRC 15051 / NCIMB 9469 / D465)).